The chain runs to 567 residues: Proline--tRNA ligase (567 aa).

This sequence belongs to the class-II aminoacyl-tRNA synthetase family. ProS type 1 subfamily. In terms of assembly, homodimer.

Its subcellular location is the cytoplasm. The enzyme catalyses tRNA(Pro) + L-proline + ATP = L-prolyl-tRNA(Pro) + AMP + diphosphate. In terms of biological role, catalyzes the attachment of proline to tRNA(Pro) in a two-step reaction: proline is first activated by ATP to form Pro-AMP and then transferred to the acceptor end of tRNA(Pro). As ProRS can inadvertently accommodate and process non-cognate amino acids such as alanine and cysteine, to avoid such errors it has two additional distinct editing activities against alanine. One activity is designated as 'pretransfer' editing and involves the tRNA(Pro)-independent hydrolysis of activated Ala-AMP. The other activity is designated 'posttransfer' editing and involves deacylation of mischarged Ala-tRNA(Pro). The misacylated Cys-tRNA(Pro) is not edited by ProRS. This Campylobacter fetus subsp. fetus (strain 82-40) protein is Proline--tRNA ligase.